The sequence spans 195 residues: uncharacterized protein (195 aa).

Disordered regions lie at residues 1–51 (MTHN…GPSY) and 160–195 (SYSQ…KSCN). Positions 13–28 (SYQNQAPQPQYYTRQP) are enriched in polar residues. The segment covering 170-189 (YYKKHKHHSHHRPKHVKSSR) has biased composition (basic residues).

This is an uncharacterized protein from Acanthamoeba polyphaga mimivirus (APMV).